A 344-amino-acid polypeptide reads, in one-letter code: tRNA N6-adenosine threonylcarbamoyltransferase (344 aa).

Positions 114 and 118 each coordinate Fe cation. Substrate is bound by residues 136–140 (LVSGG), D170, G183, D187, and N278. D306 is a binding site for Fe cation. The disordered stretch occupies residues 325–344 (PSPLDVPSDPGLPVMQGQVR).

It belongs to the KAE1 / TsaD family. Requires Fe(2+) as cofactor.

Its subcellular location is the cytoplasm. It carries out the reaction L-threonylcarbamoyladenylate + adenosine(37) in tRNA = N(6)-L-threonylcarbamoyladenosine(37) in tRNA + AMP + H(+). In terms of biological role, required for the formation of a threonylcarbamoyl group on adenosine at position 37 (t(6)A37) in tRNAs that read codons beginning with adenine. Is involved in the transfer of the threonylcarbamoyl moiety of threonylcarbamoyl-AMP (TC-AMP) to the N6 group of A37, together with TsaE and TsaB. TsaD likely plays a direct catalytic role in this reaction. The sequence is that of tRNA N6-adenosine threonylcarbamoyltransferase from Mycobacterium tuberculosis (strain ATCC 25177 / H37Ra).